The sequence spans 881 residues: Translation initiation factor IF-2 (881 aa).

Disordered stretches follow at residues 31 to 147 and 165 to 291; these read KLAQ…TKVP and SVVG…HYDE. Positions 42–55 are enriched in basic and acidic residues; that stretch reads NSSEKPSAKVAEKV. Positions 68–77 are enriched in polar residues; that stretch reads ATPESVSSET. Acidic residues predominate over residues 114–128; it reads VEEEIASSTDSEPEV. Over residues 191–203 the composition is skewed to basic and acidic residues; it reads PKKEDKPAPKERS. The segment covering 204-233 has biased composition (polar residues); that stretch reads GQAQAKPQQSSEASSENKPHSPNNNRSSQP. A compositionally biased stretch (basic and acidic residues) spans 235 to 267; the sequence is YRRDTSKKPGSDFRDRAKKDDNPKAFTGRDRYG. Residues 278–287 are compositionally biased toward basic residues; that stretch reads RKKRVQKTKK. In terms of domain architecture, tr-type G spans 387–556; sequence IRPPIVAFMG…ALQAEVLELK (170 aa). The G1 stretch occupies residues 396–403; the sequence is GHVDHGKT. 396 to 403 contributes to the GTP binding site; that stretch reads GHVDHGKT. The segment at 421 to 425 is G2; it reads AITQH. Residues 442–445 form a G3 region; it reads DTPG. Residues 442–446 and 496–499 contribute to the GTP site; these read DTPGH and NKCD. The tract at residues 496–499 is G4; it reads NKCD. Residues 532 to 534 are G5; that stretch reads SAK.

Belongs to the TRAFAC class translation factor GTPase superfamily. Classic translation factor GTPase family. IF-2 subfamily.

It is found in the cytoplasm. In terms of biological role, one of the essential components for the initiation of protein synthesis. Protects formylmethionyl-tRNA from spontaneous hydrolysis and promotes its binding to the 30S ribosomal subunits. Also involved in the hydrolysis of GTP during the formation of the 70S ribosomal complex. The protein is Translation initiation factor IF-2 of Chlamydia felis (strain Fe/C-56) (Chlamydophila felis).